We begin with the raw amino-acid sequence, 458 residues long: Argininosuccinate lyase (458 aa).

It belongs to the lyase 1 family. Argininosuccinate lyase subfamily.

The protein resides in the cytoplasm. The enzyme catalyses 2-(N(omega)-L-arginino)succinate = fumarate + L-arginine. The protein operates within amino-acid biosynthesis; L-arginine biosynthesis; L-arginine from L-ornithine and carbamoyl phosphate: step 3/3. The polypeptide is Argininosuccinate lyase (Citrifermentans bemidjiense (strain ATCC BAA-1014 / DSM 16622 / JCM 12645 / Bem) (Geobacter bemidjiensis)).